The sequence spans 509 residues: Glycogen synthase 2 (509 aa).

Position 15 (lysine 15) interacts with ADP-alpha-D-glucose.

The protein belongs to the glycosyltransferase 1 family. Bacterial/plant glycogen synthase subfamily.

The enzyme catalyses [(1-&gt;4)-alpha-D-glucosyl](n) + ADP-alpha-D-glucose = [(1-&gt;4)-alpha-D-glucosyl](n+1) + ADP + H(+). It functions in the pathway glycan biosynthesis; glycogen biosynthesis. Its function is as follows. Synthesizes alpha-1,4-glucan chains using ADP-glucose. The protein is Glycogen synthase 2 (glgA2) of Agrobacterium fabrum (strain C58 / ATCC 33970) (Agrobacterium tumefaciens (strain C58)).